A 522-amino-acid chain; its full sequence is MKLTLWTYEGPPHVGAMRVATGMTGLHYVLHAPQGDTYADLLFTMIERRGKRPPVSYTTFQARDLGSDTAEVFQQACRDAYERFQPQAIMVGASCTAELIQDDTGGLADALSLPVPVVHLELPSYQRKENFGADESFLQICRKLAKPTERTAQVSCNILGPTALGFRHRDDVTEITQLLNAMGIAVNVVAPMGSSPADIARLGAAHFNVLLYPETAESAARWAEKTLKQPYTKVVPIGVGATRDFIAEVAKLAGVEPKADESRLRQPWWSASVDSTYLTGKRVFLFGDATHVIAAARIARDEVGFEVVGMGCYNREYARPLRAAAKDYGLEALITDDYLEVEEAIQALAPELILGTQMERHIAKRLGIPCAVISAPVHVQDFPARYSPQMGFEGANVIFDTWIHPLTMGLEEHLLTMFREDFEFHDEAGPSHHGGKAVPASAPRAEATADEGSTPEEAVPPVAAEATSGEIVWLSDAEKELKKIPFFVRGKARRNTEKFAAEKGLTRISIETLYEAKAHYAR.

A [4Fe-4S] cluster-binding site is contributed by aspartate 36. Aspartate 274 (proton donor) is an active-site residue. Glycine 409–leucine 410 contributes to the substrate binding site. Residues aspartate 426–alanine 464 form a disordered region. Low complexity predominate over residues proline 455–alanine 464.

It belongs to the ChlB/BchB/BchZ family. As to quaternary structure, protochlorophyllide reductase is composed of three subunits; BchL, BchN and BchB. Forms a heterotetramer of two BchB and two BchN subunits. The cofactor is [4Fe-4S] cluster.

It catalyses the reaction chlorophyllide a + oxidized 2[4Fe-4S]-[ferredoxin] + 2 ADP + 2 phosphate = protochlorophyllide a + reduced 2[4Fe-4S]-[ferredoxin] + 2 ATP + 2 H2O. It functions in the pathway porphyrin-containing compound metabolism; bacteriochlorophyll biosynthesis (light-independent). Functionally, component of the dark-operative protochlorophyllide reductase (DPOR) that uses Mg-ATP and reduced ferredoxin to reduce ring D of protochlorophyllide (Pchlide) to form chlorophyllide a (Chlide). This reaction is light-independent. The NB-protein (BchN-BchB) is the catalytic component of the complex. The chain is Light-independent protochlorophyllide reductase subunit B from Cereibacter sphaeroides (strain ATCC 17025 / ATH 2.4.3) (Rhodobacter sphaeroides).